The chain runs to 356 residues: S-adenosylmethionine:tRNA ribosyltransferase-isomerase (356 aa).

It belongs to the QueA family. In terms of assembly, monomer.

The protein resides in the cytoplasm. It catalyses the reaction 7-aminomethyl-7-carbaguanosine(34) in tRNA + S-adenosyl-L-methionine = epoxyqueuosine(34) in tRNA + adenine + L-methionine + 2 H(+). Its pathway is tRNA modification; tRNA-queuosine biosynthesis. Its function is as follows. Transfers and isomerizes the ribose moiety from AdoMet to the 7-aminomethyl group of 7-deazaguanine (preQ1-tRNA) to give epoxyqueuosine (oQ-tRNA). This chain is S-adenosylmethionine:tRNA ribosyltransferase-isomerase, found in Escherichia coli O8 (strain IAI1).